The sequence spans 283 residues: Phosphatidylglycerol--prolipoprotein diacylglyceryl transferase (283 aa).

The next 7 helical transmembrane spans lie at 18–38 (LFGHPIVWYGLLFALGLIILG), 59–79 (LAVYVFVGTIVGARLGHVLFY), 91–111 (IFVTWEGGLASHGGTIGIIIA), 124–144 (ILWVLDRLAVPTGIVAAMIRL), 185–205 (TQIYEALCYLAVFALCMWLYW), 213–233 (YSGLIVGVFLTGIFLSRFIIE), and 251–271 (GLNMGQLLSIPFVLAGIWLII). Residue Arg-143 coordinates a 1,2-diacyl-sn-glycero-3-phospho-(1'-sn-glycerol).

This sequence belongs to the Lgt family.

The protein resides in the cell inner membrane. It carries out the reaction L-cysteinyl-[prolipoprotein] + a 1,2-diacyl-sn-glycero-3-phospho-(1'-sn-glycerol) = an S-1,2-diacyl-sn-glyceryl-L-cysteinyl-[prolipoprotein] + sn-glycerol 1-phosphate + H(+). It functions in the pathway protein modification; lipoprotein biosynthesis (diacylglyceryl transfer). Functionally, catalyzes the transfer of the diacylglyceryl group from phosphatidylglycerol to the sulfhydryl group of the N-terminal cysteine of a prolipoprotein, the first step in the formation of mature lipoproteins. The protein is Phosphatidylglycerol--prolipoprotein diacylglyceryl transferase of Porphyromonas gingivalis (strain ATCC 33277 / DSM 20709 / CIP 103683 / JCM 12257 / NCTC 11834 / 2561).